Reading from the N-terminus, the 224-residue chain is MKILTQDEIEAHRSHTLKGGIEGALAGFAISAIIFKVLPRRYPKFKPSTLTWSIKTALWITPPTVLTAICAEEASNNFDATMYGSGSSSEDALDEHRRWKSLSTKDKFVEGLSNNKYKIITGAWAASLYGSWVIVNKDPIMTKAQKIVQARMYAQFITVGLLLASVGLSMYENKLHPNKQKVNEMRRWENALRVAEEEERLEKEGRRTGYVSNEERINSKIFKS.

The Mitochondrial intermembrane portion of the chain corresponds to 1–13 (MKILTQDEIEAHR). Residues 14 to 38 (SHTLKGGIEGALAGFAISAIIFKVL) form a helical membrane-spanning segment. Residues 39–47 (PRRYPKFKP) are Mitochondrial matrix-facing. A helical transmembrane segment spans residues 48 to 75 (STLTWSIKTALWITPPTVLTAICAEEAS). Residues 76 to 103 (NNFDATMYGSGSSSEDALDEHRRWKSLS) lie on the Mitochondrial intermembrane side of the membrane. The HIG1 domain maps to 89 to 180 (SEDALDEHRR…YENKLHPNKQ (92 aa)). A helical transmembrane segment spans residues 104-133 (TKDKFVEGLSNNKYKIITGAWAASLYGSWV). The Mitochondrial matrix portion of the chain corresponds to 134–142 (IVNKDPIMT). A helical membrane pass occupies residues 143–173 (KAQKIVQARMYAQFITVGLLLASVGLSMYEN). Residues 174–184 (KLHPNKQKVNE) are Mitochondrial intermembrane-facing. The helical transmembrane segment at 185–204 (MRRWENALRVAEEEERLEKE) threads the bilayer. Residues 205–224 (GRRTGYVSNEERINSKIFKS) are Mitochondrial matrix-facing.

Associates with a subpopulation of the cytochrome bc1-cytochrome c oxidase supercomplexes. Associates in substoichiometric amounts with complex IV. Interacts with COX3.

The protein resides in the mitochondrion membrane. Assembly factor that plays a role in the assembly of the respiratory chain supercomplexes (SCs) composed of ubiquinol-cytochrome c oxidoreductase (cytochrome b-c1 complex, complex III, CIII) and cytochrome c oxidase (complex IV, CIV). May be required for late-stage assembly of the COX12 and COX13 subunits. Required for the generation and maintenance of a normal proton motive force (PMF) across the inner mitochondrial membrane (IMM) by preventing proton leakage through an inactive population of CIV that accumulates when RCF1 and/or RCF2 proteins are absent. This is Respiratory supercomplex factor 2, mitochondrial (RCF2) from Saccharomyces cerevisiae (strain ATCC 204508 / S288c) (Baker's yeast).